The chain runs to 265 residues: Transmembrane protein 270 (265 aa).

A run of 3 helical transmembrane segments spans residues 72-92 (PLGQ…WLVL), 130-150 (LFLS…VVTW), and 185-205 (LYWW…YLIT). The interval 229 to 265 (QEVEPQEVSGSSLLPSLSASSDSESGTVLPEQETPRE) is disordered. The span at 237–253 (SGSSLLPSLSASSDSES) shows a compositional bias: low complexity.

It is found in the membrane. The sequence is that of Transmembrane protein 270 from Homo sapiens (Human).